A 329-amino-acid chain; its full sequence is GTP 3',8-cyclase (329 aa).

In terms of domain architecture, Radical SAM core spans Ala8 to Ala234. Arg17 contributes to the GTP binding site. [4Fe-4S] cluster is bound by residues Cys24 and Cys28. Tyr30 is an S-adenosyl-L-methionine binding site. Cys31 is a binding site for [4Fe-4S] cluster. Position 68 (Arg68) interacts with GTP. Position 72 (Gly72) interacts with S-adenosyl-L-methionine. Thr99 contributes to the GTP binding site. Position 123 (Ser123) interacts with S-adenosyl-L-methionine. Lys160 lines the GTP pocket. Met194 lines the S-adenosyl-L-methionine pocket. [4Fe-4S] cluster-binding residues include Cys257 and Cys260. Arg262 to Arg264 lines the GTP pocket. Position 274 (Cys274) interacts with [4Fe-4S] cluster.

Belongs to the radical SAM superfamily. MoaA family. In terms of assembly, monomer and homodimer. It depends on [4Fe-4S] cluster as a cofactor.

It carries out the reaction GTP + AH2 + S-adenosyl-L-methionine = (8S)-3',8-cyclo-7,8-dihydroguanosine 5'-triphosphate + 5'-deoxyadenosine + L-methionine + A + H(+). It functions in the pathway cofactor biosynthesis; molybdopterin biosynthesis. In terms of biological role, catalyzes the cyclization of GTP to (8S)-3',8-cyclo-7,8-dihydroguanosine 5'-triphosphate. The sequence is that of GTP 3',8-cyclase from Escherichia coli O127:H6 (strain E2348/69 / EPEC).